Consider the following 434-residue polypeptide: Putative MgpC-like protein MPN_149 (434 aa).

2 disordered regions span residues 168–193 and 215–267; these read GSGQ…PKAV and EPLD…DNNG. Over residues 170-184 the composition is skewed to polar residues; sequence GQESSWNSQRSQKVL. The span at 218–229 shows a compositional bias: basic and acidic residues; that stretch reads DSTKDGKGKDES. The span at 248–267 shows a compositional bias: polar residues; that stretch reads STGSQMAAVTDSQQSGDNNG.

This sequence belongs to the MgpC family.

The polypeptide is Putative MgpC-like protein MPN_149 (Mycoplasma pneumoniae (strain ATCC 29342 / M129 / Subtype 1) (Mycoplasmoides pneumoniae)).